The chain runs to 100 residues: MSCYTAILKSVGGLALFQVANGAIDLCRHFFMYFCEQKLRPNSFWFVVVRAIASMIMYLVLGIALLYISEQDDKKNTNNDSNSNNDKRNVSSINSNSSHK.

A signal peptide spans 1 to 22 (MSCYTAILKSVGGLALFQVANG). Residues 23–45 (AIDLCRHFFMYFCEQKLRPNSFW) lie on the Intravirion side of the membrane. Residues 46–66 (FVVVRAIASMIMYLVLGIALL) traverse the membrane as a helical segment. Residues 67 to 83 (YISEQDDKKNTNNDSNS) are Virion surface-facing. A disordered region spans residues 75–100 (KNTNNDSNSNNDKRNVSSINSNSSHK). 3 N-linked (GlcNAc...) asparagine; by host glycosylation sites follow: Asn-79, Asn-89, and Asn-96.

It belongs to the chordopoxvirinae A9 family.

Its subcellular location is the virion membrane. The protein localises to the host cytoplasm. Envelope protein. Required for an early step in virion morphogenesis. This Monkeypox virus protein is Virion membrane protein OPG135 (OPG135).